A 445-amino-acid chain; its full sequence is Probable fructoselysine/psicoselysine transporter FrlA (445 aa).

The next 11 helical transmembrane spans lie at 10 to 32, 39 to 61, 97 to 119, 126 to 143, 153 to 175, 188 to 210, 230 to 252, 272 to 294, 341 to 363, 384 to 406, and 411 to 433; these read LGFWAVLAIAVGTTVGSGIFVSV, AGTPWLTVLAFVIGGLIVIPQMC, FWANDAPSLSIMALAIVSNLGFL, LGKFIAAGLIIAFMLLHL, QTLITIAKIIPFTIVIGLGIFWF, IGATGSFMALLAGISATSWSYTG, RALIGSCLLVLVLYTLLALVISG, WIPALGSTAGIFVAITAMIVILG, GIFFIFVSDLTSLLGYFTLVMCF, LWRTPAFGLMTPLAIASSLILVA, and WAPIPGLICAVIVIATGLPAYAF.

Belongs to the amino acid-polyamine-organocation (APC) superfamily.

The protein resides in the cell inner membrane. It carries out the reaction N(6)-(D-fructosyl)-L-lysine(in) = N(6)-(D-fructosyl)-L-lysine(out). It catalyses the reaction N(6)-(D-psicosyl)-L-lysine(in) = N(6)-(D-psicosyl)-L-lysine(out). It participates in carbohydrate metabolism; fructoselysine degradation. Functionally, is likely involved in the transport of fructoselysine and psicoselysine to the cytoplasm, where they are degraded. In Escherichia coli O157:H7, this protein is Probable fructoselysine/psicoselysine transporter FrlA (frlA).